Reading from the N-terminus, the 767-residue chain is DNA topoisomerase 1 (767 aa).

Positions 1–23 (MSGDHLHNDSQIEADFRLNDSHK) are enriched in basic and acidic residues. The disordered stretch occupies residues 1–200 (MSGDHLHNDS…DNKKKKAKKE (200 aa)). At S2 the chain carries N-acetylserine. Residues S2 and S10 each carry the phosphoserine modification. Residues 24-39 (HKDKHKDREHRHKEHK) are compositionally biased toward basic residues. A compositionally biased stretch (basic and acidic residues) spans 40 to 110 (KDKDKDREKS…DAKIKKEKEN (71 aa)). S59 carries the phosphoserine modification. K103 is covalently cross-linked (Glycyl lysine isopeptide (Lys-Gly) (interchain with G-Cter in SUMO2)). Residue K105 forms a Glycyl lysine isopeptide (Lys-Gly) (interchain with G-Cter in SUMO); alternate linkage. K105 is covalently cross-linked (Glycyl lysine isopeptide (Lys-Gly) (interchain with G-Cter in SUMO2); alternate). S114 is modified (phosphoserine). K119 is covalently cross-linked (Glycyl lysine isopeptide (Lys-Gly) (interchain with G-Cter in SUMO); alternate). A Glycyl lysine isopeptide (Lys-Gly) (interchain with G-Cter in SUMO2); alternate cross-link involves residue K119. K119 is covalently cross-linked (Glycyl lysine isopeptide (Lys-Gly) (interchain with G-Cter in SUMO1); alternate). Over residues 131–168 (PKEDIKPLKRPRDEDDADYKPKKIKTEDIKKEKKRKLE) the composition is skewed to basic and acidic residues. Glycyl lysine isopeptide (Lys-Gly) (interchain with G-Cter in SUMO2) cross-links involve residues K136 and K150. K155 is covalently cross-linked (Glycyl lysine isopeptide (Lys-Gly) (interchain with G-Cter in SUMO); alternate). K155 is covalently cross-linked (Glycyl lysine isopeptide (Lys-Gly) (interchain with G-Cter in SUMO2); alternate). Glycyl lysine isopeptide (Lys-Gly) (interchain with G-Cter in SUMO2) cross-links involve residues K160 and K166. A Glycyl lysine isopeptide (Lys-Gly) (interchain with G-Cter in SUMO2); alternate cross-link involves residue K174. K174 carries the post-translational modification N6-acetyllysine; alternate. The span at 181–200 (KDKDKKVAEPDNKKKKAKKE) shows a compositional bias: basic and acidic residues. A Glycyl lysine isopeptide (Lys-Gly) (interchain with G-Cter in SUMO2) cross-link involves residue K206. K282 carries the N6-acetyllysine modification. K338 participates in a covalent cross-link: Glycyl lysine isopeptide (Lys-Gly) (interchain with G-Cter in SUMO2). Interaction with DNA stretches follow at residues 427 to 428 (KY) and 490 to 495 (RAGNEK). Residues 434-767 (SSRIKGEKDW…IDMTDEDYEF (334 aa)) form the Topo IB-type catalytic domain. Residue S508 is modified to Phosphoserine; by CK2. K551 participates in a covalent cross-link: Glycyl lysine isopeptide (Lys-Gly) (interchain with G-Cter in SUMO2). An interaction with DNA region spans residues 587–589 (TAK). Glycyl lysine isopeptide (Lys-Gly) (interchain with G-Cter in SUMO2) cross-links involve residues K644, K702, and K714. Y725 (O-(3'-phospho-DNA)-tyrosine intermediate) is an active-site residue.

Belongs to the type IB topoisomerase family. As to quaternary structure, monomer. Interacts with ERCC6. Interacts with TPRN; TPRN interacts with a number of DNA damage response proteins, is recruited to sites of DNA damage and may play a role in DNA damage repair. In terms of processing, sumoylated. Lys-119 is the main site of sumoylation. Sumoylation plays a role in partitioning TOP1 between nucleoli and nucleoplasm. Levels are dramatically increased on camptothecin (CPT) treatment. Phosphorylation at Ser-508 by CK2 increases binding to supercoiled DNA and sensitivity to camptothecin.

Its subcellular location is the nucleus. The protein resides in the nucleolus. It localises to the nucleoplasm. The enzyme catalyses ATP-independent breakage of single-stranded DNA, followed by passage and rejoining.. Functionally, releases the supercoiling and torsional tension of DNA introduced during the DNA replication and transcription by transiently cleaving and rejoining one strand of the DNA duplex. Introduces a single-strand break via transesterification at a target site in duplex DNA. The scissile phosphodiester is attacked by the catalytic tyrosine of the enzyme, resulting in the formation of a DNA-(3'-phosphotyrosyl)-enzyme intermediate and the expulsion of a 5'-OH DNA strand. The free DNA strand then rotates around the intact phosphodiester bond on the opposing strand, thus removing DNA supercoils. Finally, in the religation step, the DNA 5'-OH attacks the covalent intermediate to expel the active-site tyrosine and restore the DNA phosphodiester backbone. Regulates the alternative splicing of tissue factor (F3) pre-mRNA in endothelial cells. Involved in the circadian transcription of the core circadian clock component BMAL1 by altering the chromatin structure around the ROR response elements (ROREs) on the BMAL1 promoter. The protein is DNA topoisomerase 1 (Top1) of Rattus norvegicus (Rat).